Consider the following 97-residue polypeptide: Cysteine-rich and transmembrane domain-containing protein 1 (97 aa).

Over residues 1–40 the composition is skewed to pro residues; sequence MNQENPPPYPGPGPTAPYPPYPPQPMGPGPMGGPYPPPQG. A disordered region spans residues 1–61; that stretch reads MNQENPPPYP…QGGPQEPPKT (61 aa). Low complexity predominate over residues 41–50; sequence YPYQGYPQYG. The chain crosses the membrane as a helical span at residues 74–91; that stretch reads LGPSTCLTACWTALCCCC.

It belongs to the CYSTM1 family.

It localises to the membrane. This Homo sapiens (Human) protein is Cysteine-rich and transmembrane domain-containing protein 1 (CYSTM1).